The primary structure comprises 436 residues: Glutamate-1-semialdehyde 2,1-aminomutase (436 aa).

N6-(pyridoxal phosphate)lysine is present on lysine 274.

The protein belongs to the class-III pyridoxal-phosphate-dependent aminotransferase family. HemL subfamily. Homodimer. It depends on pyridoxal 5'-phosphate as a cofactor.

It is found in the cytoplasm. It catalyses the reaction (S)-4-amino-5-oxopentanoate = 5-aminolevulinate. It participates in porphyrin-containing compound metabolism; protoporphyrin-IX biosynthesis; 5-aminolevulinate from L-glutamyl-tRNA(Glu): step 2/2. This chain is Glutamate-1-semialdehyde 2,1-aminomutase, found in Albidiferax ferrireducens (strain ATCC BAA-621 / DSM 15236 / T118) (Rhodoferax ferrireducens).